The sequence spans 530 residues: Glucose-6-phosphate isomerase (530 aa).

Glutamate 322 serves as the catalytic Proton donor. Residues histidine 351 and lysine 455 contribute to the active site.

Belongs to the GPI family.

It localises to the cytoplasm. It catalyses the reaction alpha-D-glucose 6-phosphate = beta-D-fructose 6-phosphate. Its pathway is carbohydrate biosynthesis; gluconeogenesis. It participates in carbohydrate degradation; glycolysis; D-glyceraldehyde 3-phosphate and glycerone phosphate from D-glucose: step 2/4. In terms of biological role, catalyzes the reversible isomerization of glucose-6-phosphate to fructose-6-phosphate. The sequence is that of Glucose-6-phosphate isomerase from Geobacter sp. (strain M21).